The primary structure comprises 211 residues: Guanylate kinase (211 aa).

Residues G5–E184 enclose the Guanylate kinase-like domain. G12–G19 provides a ligand contact to ATP.

This sequence belongs to the guanylate kinase family.

The protein localises to the cytoplasm. It catalyses the reaction GMP + ATP = GDP + ADP. Its function is as follows. Essential for recycling GMP and indirectly, cGMP. The polypeptide is Guanylate kinase (Streptococcus pyogenes serotype M3 (strain SSI-1)).